The following is a 173-amino-acid chain: Photosystem I assembly protein Ycf3 (173 aa).

TPR repeat units follow at residues 35–68 (AFVYYRDGMSAQADGEYAEALDNYYEALKLEEDP), 72–105 (SYILYNIGIIHASNGDQEKALEYYNQSVDLNPRM), and 120–153 (GEKAREEGREEEAEALYDKAAEYWKQAIRLAPNN).

It belongs to the Ycf3 family.

It is found in the cellular thylakoid membrane. In terms of biological role, essential for the assembly of the photosystem I (PSI) complex. May act as a chaperone-like factor to guide the assembly of the PSI subunits. The chain is Photosystem I assembly protein Ycf3 from Rippkaea orientalis (strain PCC 8801 / RF-1) (Cyanothece sp. (strain PCC 8801)).